The chain runs to 151 residues: Protein SprT-like (151 aa).

Residues 6–147 form the SprT-like domain; the sequence is LQRMVENLSE…GHCNGKLRMK (142 aa). Histidine 67 provides a ligand contact to Zn(2+). Residue glutamate 68 is part of the active site. Zn(2+) is bound at residue histidine 71.

This sequence belongs to the SprT family. Requires Zn(2+) as cofactor.

It localises to the cytoplasm. In Staphylococcus aureus (strain Mu3 / ATCC 700698), this protein is Protein SprT-like.